The chain runs to 225 residues: Small ribosomal subunit protein uS2 (225 aa).

A compositionally biased stretch (basic and acidic residues) spans 1-14 (MAEAKPAPEKEAAA). The segment at 1-33 (MAEAKPAPEKEAAAKTESVPVETEGEGPSVKEG) is disordered.

It belongs to the universal ribosomal protein uS2 family.

The chain is Small ribosomal subunit protein uS2 from Methanosarcina barkeri (strain Fusaro / DSM 804).